A 157-amino-acid chain; its full sequence is Cytochrome c-type biogenesis protein CcmE (157 aa).

Topologically, residues 1–7 (MTPRQRR) are cytoplasmic. The helical; Signal-anchor for type II membrane protein transmembrane segment at 8–28 (LGLLAAALACCGVAAALVLNA) threads the bilayer. Residues 29 to 157 (FRANLVFFFS…GAMAAQELRR (129 aa)) lie on the Periplasmic side of the membrane. Residues His-123 and Tyr-127 each coordinate heme.

It belongs to the CcmE/CycJ family.

It is found in the cell inner membrane. In terms of biological role, heme chaperone required for the biogenesis of c-type cytochromes. Transiently binds heme delivered by CcmC and transfers the heme to apo-cytochromes in a process facilitated by CcmF and CcmH. The chain is Cytochrome c-type biogenesis protein CcmE from Cupriavidus taiwanensis (strain DSM 17343 / BCRC 17206 / CCUG 44338 / CIP 107171 / LMG 19424 / R1) (Ralstonia taiwanensis (strain LMG 19424)).